The sequence spans 61 residues: Metallothionein-2 (61 aa).

At M1 the chain carries N-acetylmethionine. The segment at 1-29 (MDPNCSCATDGSCSCAGSCKCKECKCTTC) is beta. A divalent metal cation-binding residues include C5, C7, C13, C15, C19, C21, C24, C26, C29, C33, C34, C36, C37, C41, C44, C48, C50, and C57. Positions 30 to 61 (KKSCCSCCPVGCAKCSQGCVCKEASDKCSCCA) are alpha. S58 is modified (phosphoserine). Residues C59 and C60 each coordinate a divalent metal cation.

It belongs to the metallothionein superfamily. Type 1 family.

Metallothioneins have a high content of cysteine residues that bind various heavy metals; these proteins are transcriptionally regulated by both heavy metals and glucocorticoids. The protein is Metallothionein-2 (MT2) of Cricetulus griseus (Chinese hamster).